A 54-amino-acid chain; its full sequence is UPF0391 membrane protein BMEI0373 (54 aa).

Transmembrane regions (helical) follow at residues 5 to 25 (VLVFLVVALVAGALGFGGIAG) and 29 to 48 (GIAQILFFFFLALLVISLIA).

It belongs to the UPF0391 family.

The protein resides in the cell membrane. This chain is UPF0391 membrane protein BMEI0373, found in Brucella melitensis biotype 1 (strain ATCC 23456 / CCUG 17765 / NCTC 10094 / 16M).